A 93-amino-acid chain; its full sequence is Defensin alpha 4 (93 aa).

Residues 1 to 19 form the signal peptide; sequence MRTLTLLITLLLLALHTQA. The propeptide occupies 20–62; it reads ESPQERAKAAPDQDMVMEDQDIFISFGGYKGTVLQDAVVKAGQ. 3 disulfide bridges follow: Cys-64–Cys-92, Cys-66–Cys-81, and Cys-71–Cys-91.

This sequence belongs to the alpha-defensin family. In terms of tissue distribution, expressed in neutrophils (at protein level). Highest expression in bone marrow and to a much lesser extent in small intestine.

The protein localises to the secreted. Host-defense peptide that has antimicrobial activity against Gram-positive and Gram-negative bacteria and fungi (in vitro). Exhibits activity against E.coli, A.calcoaceticus, S,aureus and C.albicans. This Rattus norvegicus (Rat) protein is Defensin alpha 4.